Reading from the N-terminus, the 313-residue chain is Porphobilinogen deaminase (313 aa).

An S-(dipyrrolylmethanemethyl)cysteine modification is found at C241.

This sequence belongs to the HMBS family. As to quaternary structure, monomer. It depends on dipyrromethane as a cofactor.

It catalyses the reaction 4 porphobilinogen + H2O = hydroxymethylbilane + 4 NH4(+). It functions in the pathway porphyrin-containing compound metabolism; protoporphyrin-IX biosynthesis; coproporphyrinogen-III from 5-aminolevulinate: step 2/4. The protein operates within porphyrin-containing compound metabolism; chlorophyll biosynthesis. Tetrapolymerization of the monopyrrole PBG into the hydroxymethylbilane pre-uroporphyrinogen in several discrete steps. In Chlorobium phaeobacteroides (strain BS1), this protein is Porphobilinogen deaminase.